Here is a 448-residue protein sequence, read N- to C-terminus: F-box/FBD/LRR-repeat protein At2g04230 (448 aa).

An F-box domain is found at 12 to 64 (EDRISDLPDALLLQILSSLPTENAIATSVLSKRWRSLWTMLPKLKFDSNFNPV). 7 LRR repeats span residues 72 to 98 (PTMF…HLSF), 149 to 176 (ILKL…YLDQ), 177 to 202 (VHFK…VVHR), 204 to 225 (SNAD…TIED), 226 to 251 (LRQE…NING), 271 to 296 (ISNV…ILHL), and 319 to 345 (THER…KLTD). The region spanning 359-410 (KWNPPKCAPECLLFHLETFLWIGYEWQRGDEKEVATYILENARRLKKATFST) is the FBD domain.

The sequence is that of F-box/FBD/LRR-repeat protein At2g04230 from Arabidopsis thaliana (Mouse-ear cress).